A 65-amino-acid chain; its full sequence is pH-response transcription factor pacC/RIM101 (65 aa).

The segment at 16-40 adopts a C2H2-type 1 zinc-finger fold; the sequence is LTCQWNSCRTTTVKRDHITSHIRVH. A C2H2-type 2; degenerate zinc finger spans residues 46-65; it reads HKCEFCGKSFKRPQDLKKHV.

This sequence belongs to the pacC/RIM101 family.

The protein resides in the nucleus. In terms of biological role, transcription factor that mediates regulation of both acid- and alkaline-expressed genes in response to ambient pH. At alkaline ambient pH, activates transcription of alkaline-expressed genes (including pac1 itself) and represses transcription of acid-expressed genes. This Colletotrichum gloeosporioides (Anthracnose fungus) protein is pH-response transcription factor pacC/RIM101 (pac1).